A 138-amino-acid chain; its full sequence is Ribulose bisphosphate carboxylase small subunit (138 aa).

It belongs to the RuBisCO small chain family. As to quaternary structure, heterohexadecamer of 8 large and 8 small subunits.

It is found in the plastid. It localises to the chloroplast. RuBisCO catalyzes two reactions: the carboxylation of D-ribulose 1,5-bisphosphate, the primary event in carbon dioxide fixation, as well as the oxidative fragmentation of the pentose substrate in the photorespiration process. Both reactions occur simultaneously and in competition at the same active site. Although the small subunit is not catalytic it is essential for maximal activity. In Cyanidioschyzon merolae (strain NIES-3377 / 10D) (Unicellular red alga), this protein is Ribulose bisphosphate carboxylase small subunit.